Here is a 242-residue protein sequence, read N- to C-terminus: ATP-dependent dethiobiotin synthetase BioD (242 aa).

12–17 (EVGKTV) contacts ATP. T16 provides a ligand contact to Mg(2+). The active site involves K37. A substrate-binding site is contributed by S41. Residues D51 and 112-115 (EGAG) each bind ATP. Mg(2+)-binding residues include D51 and E112.

Belongs to the dethiobiotin synthetase family. Homodimer. The cofactor is Mg(2+).

It localises to the cytoplasm. The catalysed reaction is (7R,8S)-7,8-diammoniononanoate + CO2 + ATP = (4R,5S)-dethiobiotin + ADP + phosphate + 3 H(+). It functions in the pathway cofactor biosynthesis; biotin biosynthesis; biotin from 7,8-diaminononanoate: step 1/2. Its function is as follows. Catalyzes a mechanistically unusual reaction, the ATP-dependent insertion of CO2 between the N7 and N8 nitrogen atoms of 7,8-diaminopelargonic acid (DAPA, also called 7,8-diammoniononanoate) to form a ureido ring. This Bacillus cereus (strain G9842) protein is ATP-dependent dethiobiotin synthetase BioD.